Consider the following 301-residue polypeptide: MFFRNLTFFRFPTTTDFSEVDTLLPHALLKPVGALEMNSRGFISPFGREEKELLSHRIAEHLWLTVGGEDKILPAAVVNDLLERKLEEIEEKEGRRPGGRERKRMKDDLLHELLPRAFVKSSRNDAFIDLQHGYVAVDTSSRKTGEYFMSDIRGLLGSFPAMPLNAEVAPRSILTGWIAGEPLPTGLSLGEECEMKDPVEGGAVVKCQHQELRCDEIDKHLDAGKQVTKLALIFEDNLSFVIGDDLIVRKLKFLDGALDQLEHADEDGRRAEFDARFALQSAEIRRLFLLLEEAFKLSKAD.

This sequence belongs to the RdgC family.

The protein resides in the cytoplasm. It localises to the nucleoid. In terms of biological role, may be involved in recombination. The protein is Recombination-associated protein RdgC of Stenotrophomonas maltophilia (strain R551-3).